A 295-amino-acid chain; its full sequence is Non-selective voltage-gated ion channel VDAC2 (295 aa).

Residues Lys-24 and Lys-32 each contribute to the ATP site. Residue Lys-32 is modified to N6-acetyllysine; alternate. Position 32 is an N6-succinyllysine; alternate (Lys-32). Lys-32 is covalently cross-linked (Glycyl lysine isopeptide (Lys-Gly) (interchain with G-Cter in ubiquitin); alternate). The next 2 beta stranded transmembrane spans lie at 38–47 and 51–59; these read LVKLDVKTKS and VEFSTSGSS. Lys-65 is covalently cross-linked (Glycyl lysine isopeptide (Lys-Gly) (interchain with G-Cter in ubiquitin)). A beta stranded membrane pass occupies residues 66–76; the sequence is VSGTLETKYKW. The residue at position 79 (Tyr-79) is a Phosphotyrosine. 3 beta stranded membrane-spanning segments follow: residues 81 to 88, 92 to 101, and 107 to 116; these read LTFTEKWN, TLGTEIAIED, and LKLTFDTTFS. Thr-119 carries the phosphothreonine modification. The residue at position 121 (Lys-121) is an N6-acetyllysine; alternate. Lys-121 is covalently cross-linked (Glycyl lysine isopeptide (Lys-Gly) (interchain with G-Cter in ubiquitin); alternate). A Glycyl lysine isopeptide (Lys-Gly) (interchain with G-Cter in ubiquitin) cross-link involves residue Lys-122. The next 4 membrane-spanning stretches (beta stranded) occupy residues 123–132, 135–142, 149–157, and 162–170; these read SGKIKSAYKR, INLGCDVD, AIHGSAVFG, and LAGYQMTFD. Lys-173 participates in a covalent cross-link: Glycyl lysine isopeptide (Lys-Gly) (interchain with G-Cter in ubiquitin). The next 6 membrane-spanning stretches (beta stranded) occupy residues 175 to 187, 190 to 197, 201 to 210, 214 to 223, 230 to 239, and 243 to 250; these read KLTR…GYRT, FQLHTNVN, EFGGSIYQKV, FDTSVNLAWT, RFGIAAKYQL, and ASISAKVN. Residue Tyr-237 is modified to Phosphotyrosine. Ser-252 is modified (phosphoserine). NAD(+)-binding positions include 254-256 and 272-276; these read LIG and SALVD. Transmembrane regions (beta stranded) follow at residues 254–263 and 266–275; these read LIGVGYTQTL and GVKLTLSALV. Lys-278 is subject to N6-acetyllysine; alternate. Lys-278 is covalently cross-linked (Glycyl lysine isopeptide (Lys-Gly) (interchain with G-Cter in ubiquitin); alternate). The chain crosses the membrane as a beta stranded span at residues 285–294; it reads HKLGLALELE.

Belongs to the eukaryotic mitochondrial porin family. As to quaternary structure, monomer, homodimer and higher order oligomers; formation of higher order structures is necessary for scramblase activity. Interacts with ARMC12 in a TBC1D21-dependent manner. Interacts with KLC3. Interacts with SPATA33. Interacts with PPP3CC in a SPATA33-dependent manner. Ubiquitinated by PRKN during mitophagy, leading to its degradation and enhancement of mitophagy. Deubiquitinated by USP30. As to expression, highly expressed in heart, kidney, brain and ascitic tumor with very low levels in liver. Expressed in the head region of epididymal sperm.

It localises to the mitochondrion outer membrane. The protein resides in the membrane. It catalyses the reaction chloride(in) = chloride(out). The catalysed reaction is K(+)(in) = K(+)(out). It carries out the reaction a 1,2-diacyl-sn-glycero-3-phospho-L-serine(in) = a 1,2-diacyl-sn-glycero-3-phospho-L-serine(out). The enzyme catalyses a 1,2-diacyl-sn-glycero-3-phosphocholine(in) = a 1,2-diacyl-sn-glycero-3-phosphocholine(out). It catalyses the reaction a 1,2-diacyl-sn-glycero-3-phospho-(1D-myo-inositol)(in) = a 1,2-diacyl-sn-glycero-3-phospho-(1D-myo-inositol)(out). Functionally, non-selective voltage-gated ion channel that mediates the transport of anions and cations through the mitochondrion outer membrane and plasma membrane. The channel adopts an open conformation at zero mV and a closed conformation at both positive and negative potentials. There are two populations of channels; the main that functions in a lower open-state conductance with lower ion selectivity, that switch, in a voltage-dependent manner, from the open to a low-conducting 'closed' state and the other that has a normal ion selectivity in the typical high conductance, 'open' state. Binds various lipids, including the sphingolipid ceramide, the phospholipid phosphatidylcholine, and the sterols cholesterol and oxysterol. Binding of ceramide promotes the mitochondrial outer membrane permeabilization (MOMP) apoptotic pathway. Catalyzes the scrambling of phospholipids across the outer mitochondrial membrane; the mechanism is unrelated to channel activity and is capable of translocating both anionic and zwitterionic phospholipids. The polypeptide is Non-selective voltage-gated ion channel VDAC2 (Rattus norvegicus (Rat)).